The following is a 570-amino-acid chain: Multidrug and toxin extrusion protein 1 (570 aa).

Position 1 is an N-acetylmethionine (methionine 1). Residues 1-37 (MEAPEEPAPVRGGPEATLEVRGSRCLRLSAFREELRA) lie on the Cytoplasmic side of the membrane. The chain crosses the membrane as a helical span at residues 38–58 (LLVLAGPAFLVQLMVFLISFI). Over 59–72 (SSVFCGHLGKLELD) the chain is Extracellular. The helical transmembrane segment at 73 to 93 (AVTLAIAVINVTGVSVGFGLS) threads the bilayer. The Cytoplasmic portion of the chain corresponds to 94–123 (SACDTLISQTYGSQNLKHVGVILQRSALVL). The helical transmembrane segment at 124–144 (LLCCFPCWALFLNTQHILLLF) threads the bilayer. Residues 145–152 (RQDPDVSR) are Extracellular-facing. Residues 153 to 173 (LTQTYVTIFIPALPATFLYML) form a helical membrane-spanning segment. Over 174 to 176 (QVK) the chain is Cytoplasmic. The chain crosses the membrane as a helical span at residues 177–197 (YLLNQGIVLPQIVTGVAANLV). The Extracellular segment spans residues 198 to 216 (NALANYLFLHQLHLGVIGS). The helical transmembrane segment at 217-237 (ALANLISQYTLALLLFLYILG) threads the bilayer. At 238–256 (KKLHQATWGGWSLECLQDW) the chain is on the cytoplasmic side. A helical transmembrane segment spans residues 257–276 (ASFLRLAIPSMLMLCMEWWA). Residues 277 to 295 (YEVGSFLSGILGMVELGAQ) lie on the Extracellular side of the membrane. Residues 296 to 316 (SIVYELAIIVYMVPAGFSVAA) form a helical membrane-spanning segment. Residues 317–336 (SVRVGNALGAGDMEQARKSS) lie on the Cytoplasmic side of the membrane. The chain crosses the membrane as a helical span at residues 337–357 (TVSLLITVLFAVAFSVLLLSC). The Extracellular segment spans residues 358-370 (KDHVGYIFTTDRD). A helical transmembrane segment spans residues 371-391 (IINLVAQVVPIYAVSHLFEAL). The Cytoplasmic segment spans residues 392-408 (ACTSGGVLRGSGNQKVG). The helical transmembrane segment at 409 to 429 (AIVNTIGYYVVGLPIGIALMF) threads the bilayer. Over 430-437 (ATTLGVMG) the chain is Extracellular. Residues 438 to 458 (LWSGIIICTVFQAVCFLGFII) traverse the membrane as a helical segment. Over 459 to 546 (QLNWKKACQQ…LSRKQLVLRR (88 aa)) the chain is Cytoplasmic. The disordered stretch occupies residues 508 to 534 (DVGKTGEPQSDQQMRQEEPLPEHPQDG). Residues 521-533 (MRQEEPLPEHPQD) are compositionally biased toward basic and acidic residues. A helical transmembrane segment spans residues 547 to 567 (GLLLLGVFLILLVGILVRFYV). The Extracellular segment spans residues 568-570 (RIQ).

This sequence belongs to the multi antimicrobial extrusion (MATE) (TC 2.A.66.1) family. As to expression, widely expressed. The highest expression is found in adrenal gland, and to a lower extent in liver, skeletal muscle and kidney. In testis, primarily localized throughout the adluminal compartment of the seminiferous tubules with expression at the peritubular myoid cells and Leydig cells.

The protein localises to the cell membrane. The protein resides in the apical cell membrane. The catalysed reaction is thiamine(out) + H(+)(in) = thiamine(in) + H(+)(out). It carries out the reaction estrone 3-sulfate(in) + H(+)(out) = estrone 3-sulfate(out) + H(+)(in). It catalyses the reaction creatinine(in) + H(+)(out) = creatinine(out) + H(+)(in). The enzyme catalyses agmatine(in) + H(+)(out) = agmatine(out) + H(+)(in). Functionally, multidrug efflux pump that functions as a H(+)/organic cation antiporter. Plays a physiological role in the excretion of cationic compounds including endogenous metabolites, drugs, toxins through the kidney and liver, into urine and bile respectively. Mediates the efflux of endogenous compounds such as creatinine, vitamin B1/thiamine, agmatine and estrone-3-sulfate. May also contribute to regulate the transport of cationic compounds in testis across the blood-testis-barrier. The protein is Multidrug and toxin extrusion protein 1 of Homo sapiens (Human).